The primary structure comprises 552 residues: MTKYVFVTGGVVSSLGKGIAAASLAAILESRGLKVTLLKLDPYINVDPGTMSPFQHGEVFVTEDGAETDLDLGHYERFISTKMRKANNFTTGQIYESVIRKERRGDYLGKTVQVIPHITNEIQAFIERGAASATCGEPDVAIVEIGGTVGDIESLPFLEAARQMSLRLGRNSACFVHLTLVPYVATAGELKTKPTQHSVQKLREIGILPHVLLCRADRRIPDDESKKISMFSNVPEDAVISVWDADSIYKIPQMLHDQGLDRIICEELKLSPKDADLSMWSELVEKLENPKHEVTIGMVGKYVDLTESYKSLIEALRHASLHTSTRVNIEYIDSEEIEANGVDSLKHLDAVLVPGGFGRRGTEGKIAAIRYARESKVPYLGICLGMQLAVIEFARDVVGLKQANSTEFDSETPERVVALITEWYDRDGKVETRTEESDLGGTMRLGSQRCPIKPGTMAEEIYGKDVNERHRHRYEVNNRFVPQLEAGGLIISARTPSEDLPEMMELPRSMHPWFVGVQFHPEFTSTPRDGHPLFKSFVEAAFANKQARGVKA.

Residues 1–270 (MTKYVFVTGG…DRIICEELKL (270 aa)) form an amidoligase domain region. Ser-13 provides a ligand contact to CTP. Ser-13 serves as a coordination point for UTP. ATP contacts are provided by residues 14 to 19 (SLGKGI) and Asp-71. Mg(2+) is bound by residues Asp-71 and Glu-144. Residues 151-153 (DIE), 191-196 (KTKPTQ), and Lys-227 contribute to the CTP site. Residues 191–196 (KTKPTQ) and Lys-227 each bind UTP. In terms of domain architecture, Glutamine amidotransferase type-1 spans 295-547 (TIGMVGKYVD…VEAAFANKQA (253 aa)). An L-glutamine-binding site is contributed by Gly-356. Cys-383 functions as the Nucleophile; for glutamine hydrolysis in the catalytic mechanism. L-glutamine-binding positions include 384-387 (LGMQ), Glu-407, and Arg-473. Catalysis depends on residues His-520 and Glu-522.

This sequence belongs to the CTP synthase family. Homotetramer.

The enzyme catalyses UTP + L-glutamine + ATP + H2O = CTP + L-glutamate + ADP + phosphate + 2 H(+). It carries out the reaction L-glutamine + H2O = L-glutamate + NH4(+). The catalysed reaction is UTP + NH4(+) + ATP = CTP + ADP + phosphate + 2 H(+). Its pathway is pyrimidine metabolism; CTP biosynthesis via de novo pathway; CTP from UDP: step 2/2. Its activity is regulated as follows. Allosterically activated by GTP, when glutamine is the substrate; GTP has no effect on the reaction when ammonia is the substrate. The allosteric effector GTP functions by stabilizing the protein conformation that binds the tetrahedral intermediate(s) formed during glutamine hydrolysis. Inhibited by the product CTP, via allosteric rather than competitive inhibition. In terms of biological role, catalyzes the ATP-dependent amination of UTP to CTP with either L-glutamine or ammonia as the source of nitrogen. Regulates intracellular CTP levels through interactions with the four ribonucleotide triphosphates. In Burkholderia ambifaria (strain ATCC BAA-244 / DSM 16087 / CCUG 44356 / LMG 19182 / AMMD) (Burkholderia cepacia (strain AMMD)), this protein is CTP synthase.